Consider the following 82-residue polypeptide: Putative defensin-like protein 134 (82 aa).

The signal sequence occupies residues 1-26 (MEVRSLNLCFLLVLVLLMSPAPTAVA). Intrachain disulfides connect C32–C79, C42–C68, C47–C74, and C51–C76.

Belongs to the DEFL family.

It localises to the secreted. This chain is Putative defensin-like protein 134, found in Arabidopsis thaliana (Mouse-ear cress).